A 305-amino-acid polypeptide reads, in one-letter code: MEFKQLPPLAAWPRLLSQNTLRWQKPISEGLTLLLLVASAWTLGKMVWVVSAEQTPVPTWSPTLSGLKAERQPLDISVLQKGELFGVFTEPKEAPVVEQPVVVDAPKTRLSLVLSGVVASNDAQKSLAVIANRGVQATYGINEVIEGTQAKLKAVMPDRVIISNSGRDETLMLEGLDYTAPATASVSNPPRPRPNQPNAVPQFEDKVDAIREAIARNPQEIFQYVRLSQVKRDDKVLGYRVSPGKDPVLFESIGLQDGDMAVALNGLDLTDPNVMNTLFQSMNEMTEMSLTVERDGQQHDVYIQF.

Residues 1–29 (MEFKQLPPLAAWPRLLSQNTLRWQKPISE) lie on the Cytoplasmic side of the membrane. A helical membrane pass occupies residues 30–50 (GLTLLLLVASAWTLGKMVWVV). At 51-305 (SAEQTPVPTW…GQQHDVYIQF (255 aa)) the chain is on the periplasmic side.

This sequence belongs to the GSP C family.

It is found in the cell inner membrane. Functionally, involved in a type II secretion system (T2SS, formerly general secretion pathway, GSP) for the export of proteins. Required for secretion of cholera toxin through the outer membrane. In Vibrio cholerae serotype O1 (strain ATCC 39315 / El Tor Inaba N16961), this protein is Type II secretion system protein C (epsC).